The chain runs to 405 residues: ATP phosphoribosyltransferase regulatory subunit (405 aa).

The protein belongs to the class-II aminoacyl-tRNA synthetase family. HisZ subfamily. In terms of assembly, heteromultimer composed of HisG and HisZ subunits.

The protein resides in the cytoplasm. It participates in amino-acid biosynthesis; L-histidine biosynthesis; L-histidine from 5-phospho-alpha-D-ribose 1-diphosphate: step 1/9. Functionally, required for the first step of histidine biosynthesis. May allow the feedback regulation of ATP phosphoribosyltransferase activity by histidine. The sequence is that of ATP phosphoribosyltransferase regulatory subunit from Microcystis aeruginosa (strain NIES-843 / IAM M-2473).